The primary structure comprises 343 residues: tRNA N6-adenosine threonylcarbamoyltransferase (343 aa).

Residues H120 and H124 each coordinate Fe cation. Substrate-binding positions include V142 to G146, D175, G188, D192, and N281. Fe cation is bound at residue D310.

Belongs to the KAE1 / TsaD family. Fe(2+) is required as a cofactor.

It localises to the cytoplasm. It catalyses the reaction L-threonylcarbamoyladenylate + adenosine(37) in tRNA = N(6)-L-threonylcarbamoyladenosine(37) in tRNA + AMP + H(+). In terms of biological role, required for the formation of a threonylcarbamoyl group on adenosine at position 37 (t(6)A37) in tRNAs that read codons beginning with adenine. Is involved in the transfer of the threonylcarbamoyl moiety of threonylcarbamoyl-AMP (TC-AMP) to the N6 group of A37, together with TsaE and TsaB. TsaD likely plays a direct catalytic role in this reaction. The chain is tRNA N6-adenosine threonylcarbamoyltransferase from Bacillus thuringiensis subsp. konkukian (strain 97-27).